The chain runs to 384 residues: 5-amino-6-(D-ribitylamino)uracil--L-tyrosine 4-hydroxyphenyl transferase 2 (384 aa).

Residues 53–286 enclose the Radical SAM core domain; sequence VSYVVNRNIY…IAISRIILHT (234 aa). Positions 67, 71, and 74 each coordinate [4Fe-4S] cluster.

The protein belongs to the radical SAM superfamily. CofH family. Consists of two subunits, CofG and CofH. Requires [4Fe-4S] cluster as cofactor.

The enzyme catalyses 5-amino-6-(D-ribitylamino)uracil + L-tyrosine + S-adenosyl-L-methionine = 5-amino-5-(4-hydroxybenzyl)-6-(D-ribitylimino)-5,6-dihydrouracil + 2-iminoacetate + 5'-deoxyadenosine + L-methionine + H(+). It participates in cofactor biosynthesis; coenzyme F0 biosynthesis. Functionally, catalyzes the radical-mediated synthesis of 5-amino-5-(4-hydroxybenzyl)-6-(D-ribitylimino)-5,6-dihydrouracil from 5-amino-6-(D-ribitylamino)uracil and L-tyrosine. The polypeptide is 5-amino-6-(D-ribitylamino)uracil--L-tyrosine 4-hydroxyphenyl transferase 2 (Methanosarcina acetivorans (strain ATCC 35395 / DSM 2834 / JCM 12185 / C2A)).